The primary structure comprises 182 residues: Kappa-casein (182 aa).

The first 20 residues, 1-20 (MKSFLLVVNALALTLPFLAV), serve as a signal peptide directing secretion. Thr-133, Thr-143, Thr-148, and Thr-151 each carry an O-linked (GalNAc...) threonine glycan. Phosphothreonine; alternate is present on Thr-157. O-linked (GalNAc...) threonine; alternate glycosylation is present at Thr-157. O-linked (GalNAc...) threonine glycans are attached at residues Thr-167, Thr-169, and Thr-178.

Belongs to the kappa-casein family. As to quaternary structure, heteromultimers composed of alpha-s1 casein and kappa casein linked by disulfide bonds. Post-translationally, the N-terminus is blocked. Mammary gland specific. Secreted in milk.

It is found in the secreted. Its function is as follows. Kappa-casein stabilizes micelle formation, preventing casein precipitation in milk. The chain is Kappa-casein (CSN3) from Homo sapiens (Human).